A 146-amino-acid chain; its full sequence is 16.0 kDa heat shock protein, peroxisomal (146 aa).

Positions 23 to 143 constitute a sHSP domain; sequence WASASATAAM…RPRTRPIAVS (121 aa). A Microbody targeting signal motif is present at residues 144–146; that stretch reads SKL.

This sequence belongs to the small heat shock protein (HSP20) family. In terms of assembly, may form oligomeric structures.

Its subcellular location is the peroxisome. This Oryza sativa subsp. japonica (Rice) protein is 16.0 kDa heat shock protein, peroxisomal (HSP16.0).